Reading from the N-terminus, the 404-residue chain is Phosphoglycerate kinase (404 aa).

Substrate-binding positions include 21–23 (DFN), Arg-36, 59–62 (HLGR), Arg-119, and Arg-162. ATP contacts are provided by residues Lys-213, Gly-300, Glu-331, and 360–363 (GGDS).

This sequence belongs to the phosphoglycerate kinase family. As to quaternary structure, monomer.

It is found in the cytoplasm. The catalysed reaction is (2R)-3-phosphoglycerate + ATP = (2R)-3-phospho-glyceroyl phosphate + ADP. It participates in carbohydrate degradation; glycolysis; pyruvate from D-glyceraldehyde 3-phosphate: step 2/5. The polypeptide is Phosphoglycerate kinase (Oenococcus oeni (strain ATCC BAA-331 / PSU-1)).